A 41-amino-acid chain; its full sequence is Urotensin-1 (41 aa).

Val-41 carries the post-translational modification Valine amide.

The protein belongs to the sauvagine/corticotropin-releasing factor/urotensin I family.

The protein localises to the secreted. Its function is as follows. Urotensin is found in the teleost caudal neurosecretory system. It has a suggested role in osmoregulation and as a corticotropin-releasing factor. This is Urotensin-1 from Catostomus commersonii (White sucker).